A 123-amino-acid chain; its full sequence is Large ribosomal subunit protein uL18 (123 aa).

The protein belongs to the universal ribosomal protein uL18 family. In terms of assembly, part of the 50S ribosomal subunit; part of the 5S rRNA/L5/L18/L25 subcomplex. Contacts the 5S and 23S rRNAs.

Its function is as follows. This is one of the proteins that bind and probably mediate the attachment of the 5S RNA into the large ribosomal subunit, where it forms part of the central protuberance. The chain is Large ribosomal subunit protein uL18 from Wolbachia pipientis subsp. Culex pipiens (strain wPip).